The chain runs to 219 residues: Probable nicotinate-nucleotide adenylyltransferase (219 aa).

It belongs to the NadD family.

The enzyme catalyses nicotinate beta-D-ribonucleotide + ATP + H(+) = deamido-NAD(+) + diphosphate. The protein operates within cofactor biosynthesis; NAD(+) biosynthesis; deamido-NAD(+) from nicotinate D-ribonucleotide: step 1/1. In terms of biological role, catalyzes the reversible adenylation of nicotinate mononucleotide (NaMN) to nicotinic acid adenine dinucleotide (NaAD). This Hahella chejuensis (strain KCTC 2396) protein is Probable nicotinate-nucleotide adenylyltransferase.